The following is a 208-amino-acid chain: Methylthioribulose-1-phosphate dehydratase (208 aa).

Zn(2+) is bound by residues His-99 and His-101.

This sequence belongs to the aldolase class II family. MtnB subfamily. It depends on Zn(2+) as a cofactor.

It catalyses the reaction 5-(methylsulfanyl)-D-ribulose 1-phosphate = 5-methylsulfanyl-2,3-dioxopentyl phosphate + H2O. The protein operates within amino-acid biosynthesis; L-methionine biosynthesis via salvage pathway; L-methionine from S-methyl-5-thio-alpha-D-ribose 1-phosphate: step 2/6. Catalyzes the dehydration of methylthioribulose-1-phosphate (MTRu-1-P) into 2,3-diketo-5-methylthiopentyl-1-phosphate (DK-MTP-1-P). This Aquifex aeolicus (strain VF5) protein is Methylthioribulose-1-phosphate dehydratase.